Consider the following 328-residue polypeptide: Sialic acid-binding Ig-like lectin 15 (328 aa).

Positions 1-19 are cleaved as a signal peptide; that stretch reads MEKSIWLLACLAWVLPTGS. Over 20–263 the chain is Extracellular; it reads FVRTKIDTTE…RFHGASGAST (244 aa). Residues 40-158 form the Ig-like V-type domain; that stretch reads PAQRWSMQVP…DVHDRYESRH (119 aa). 2 cysteine pairs are disulfide-bonded: Cys64–Cys142 and Cys95–Cys104. Residue Arg143 coordinates N-acetylneuraminate. Residues 168–251 enclose the Ig-like C2-type domain; it reads PRIVNISVLP…SLGRSEASVY (84 aa). N-linked (GlcNAc...) asparagine glycosylation occurs at Asn172. A disulfide bridge connects residues Cys187 and Cys237. A helical transmembrane segment spans residues 264–284; the sequence is VALLLGALGFKALLLLGVLAA. Topologically, residues 285 to 328 are cytoplasmic; it reads RAARRRPEHLDTPDTPPRSQAQESNYENLSQMNPRSPPATMCSP. The interval 289–328 is disordered; it reads RRPEHLDTPDTPPRSQAQESNYENLSQMNPRSPPATMCSP. Over residues 301-318 the composition is skewed to polar residues; sequence PRSQAQESNYENLSQMNP.

This sequence belongs to the immunoglobulin superfamily. SIGLEC (sialic acid binding Ig-like lectin) family. In terms of assembly, interacts with TYROBP and HCST. Expressed in macrophage and/or dendritic cells of spleen and lymph nodes.

The protein resides in the membrane. Binds sialylated glycoproteins. This chain is Sialic acid-binding Ig-like lectin 15 (SIGLEC15), found in Homo sapiens (Human).